We begin with the raw amino-acid sequence, 175 residues long: Bacterial proteasome activator (175 aa).

The tract at residues 152–175 is disordered; that stretch reads LPPGIQVPGAQRGGATHPGTGQYL. The short motif at 173–175 is the HbYX motif element; it reads QYL.

The protein belongs to the Bpa family. In terms of assembly, forms a homooligomeric, either hexameric or heptameric, ring-like structure which stacks co-axially with the proteasomal alpha-rings.

In terms of biological role, interacts with the core proteasome alpha-subunit (PrcA) through its C-terminal hydrophobic-tyrosine-X motif (HbYX motif). Interaction of Bpa with the proteasome stimulates proteasomal peptidase and casein degradation activity, which suggests Bpa could play a role in the removal of non-native or damaged proteins by influencing the conformation of the proteasome complex upon interaction. The polypeptide is Bacterial proteasome activator (Mycolicibacterium smegmatis (strain ATCC 700084 / mc(2)155) (Mycobacterium smegmatis)).